A 181-amino-acid polypeptide reads, in one-letter code: Probable calcium-binding protein CML16 (181 aa).

A disordered region spans residues Met-1–Ala-24. EF-hand domains are found at residues Pro-23–Pro-58, Ala-63–Asp-98, Glu-100–Gly-135, and Cys-136–Ala-171. Positions 36, 38, 40, 42, 47, 76, 78, 80, 87, 113, 115, 117, 119, 124, 149, 151, 153, 155, and 160 each coordinate Ca(2+).

Potential calcium sensor. This Oryza sativa subsp. japonica (Rice) protein is Probable calcium-binding protein CML16 (CML16).